The following is a 371-amino-acid chain: NDMA-dependent alcohol dehydrogenase (371 aa).

The Zn(2+) site is built by Cys40, His61, Cys91, Cys94, Cys97, Cys105, and Cys167.

The protein belongs to the zinc-containing alcohol dehydrogenase family. Homotrimer. NADH serves as cofactor.

It carries out the reaction N,N-dimethyl-4-nitrosoaniline + a primary alcohol = 4-(hydroxylamino)-N,N-dimethylaniline + an aldehyde. It catalyses the reaction ethanol + A = acetaldehyde + AH2. With respect to regulation, inhibited by trans-4-(N,N-dimethylamino)-cinnamaldehyde through direct binding to the catalytic zinc ion in a substrate-like geometry. Isobutyramide acts as a competitive inhibitor with respect to the electron acceptor NDMA. Acetaldehyde, AMP, ADP, ATP, as well as CuSO(4), FeSO(4), HgCl(2), NiCl(2), ZnSO(4), KCN, and NaN(3) are additional inhibitors of the catalytic activity. Functionally, catalytically different from common alcohol dehydrogenases. Effective in oxidizing ethanol, other primary alcohols and benzylalcohol only in the presence of p-nitroso-N,N-dimethylaniline (NDMA) as an electron acceptor. NADH acts as a cofactor here instead as a coenzyme. This chain is NDMA-dependent alcohol dehydrogenase, found in Amycolatopsis methanolica.